A 473-amino-acid polypeptide reads, in one-letter code: Hyaluronidase-2 (473 aa).

Residues 1 to 20 (MRAGLGPIITLALVLEVAWA) form the signal peptide. Cystine bridges form between cysteine 47-cysteine 340 and cysteine 211-cysteine 227. N-linked (GlcNAc...) asparagine glycans are attached at residues asparagine 74 and asparagine 103. The active-site Proton donor is the glutamate 135. An N-linked (GlcNAc...) asparagine glycan is attached at asparagine 357. Residues 361–439 (ATQYCSWTQC…YLGWGGEQCQ (79 aa)) enclose the EGF-like domain. 3 disulfides stabilise this stretch: cysteine 365-cysteine 376, cysteine 370-cysteine 427, and cysteine 429-cysteine 438. The GPI-anchor amidated aspartate moiety is linked to residue aspartate 448. A propeptide spans 449–473 (ASRAWAGAHLASLLGLVAMTLTWTL) (removed in mature form).

Belongs to the glycosyl hydrolase 56 family. As to quaternary structure, interacts with MST1R.

The protein localises to the cell membrane. The catalysed reaction is Random hydrolysis of (1-&gt;4)-linkages between N-acetyl-beta-D-glucosamine and D-glucuronate residues in hyaluronate.. Functionally, catalyzes hyaluronan degradation into small fragments that are endocytosed and degraded in lysosomes by HYAL1 and exoglycosidases. Essential for the breakdown of extracellular matrix hyaluronan. The chain is Hyaluronidase-2 (Hyal2) from Rattus norvegicus (Rat).